The primary structure comprises 46 residues: DNA-directed RNA polymerase subunit Rpo12 (46 aa).

The Zn(2+) site is built by cysteine 8, cysteine 23, and cysteine 26.

It belongs to the archaeal Rpo12/eukaryotic RPC10 RNA polymerase subunit family. In terms of assembly, part of the RNA polymerase complex. Requires Zn(2+) as cofactor.

It is found in the cytoplasm. The catalysed reaction is RNA(n) + a ribonucleoside 5'-triphosphate = RNA(n+1) + diphosphate. Its function is as follows. DNA-dependent RNA polymerase (RNAP) catalyzes the transcription of DNA into RNA using the four ribonucleoside triphosphates as substrates. This Archaeoglobus fulgidus (strain ATCC 49558 / DSM 4304 / JCM 9628 / NBRC 100126 / VC-16) protein is DNA-directed RNA polymerase subunit Rpo12.